A 262-amino-acid polypeptide reads, in one-letter code: Phosphonates import ATP-binding protein PhnC (262 aa).

Positions 5–253 (IRVEKLAKTF…RFDHLYRSIN (249 aa)) constitute an ABC transporter domain. Residue 37 to 44 (GPSGSGKS) coordinates ATP.

This sequence belongs to the ABC transporter superfamily. Phosphonates importer (TC 3.A.1.9.1) family. As to quaternary structure, the complex is composed of two ATP-binding proteins (PhnC), two transmembrane proteins (PhnE) and a solute-binding protein (PhnD).

It is found in the cell inner membrane. The enzyme catalyses phosphonate(out) + ATP + H2O = phosphonate(in) + ADP + phosphate + H(+). In terms of biological role, part of the ABC transporter complex PhnCDE involved in phosphonates import. Responsible for energy coupling to the transport system. The protein is Phosphonates import ATP-binding protein PhnC of Escherichia coli (strain UTI89 / UPEC).